Reading from the N-terminus, the 98-residue chain is MQTLSFLLALLFLVAQTPAQPTGEGEKGGTIQEPEATEAQDTAAVLMAAGAADGDDSDTKQLDTTFCRCRVSCNILEKYSGKCELSGRTARICCRKIK.

A signal peptide spans M1 to A19. The propeptide occupies Q20 to L62. 3 disulfides stabilise this stretch: C67-C94, C69-C83, and C73-C93. Residues I97–K98 constitute a propeptide that is removed on maturation.

Belongs to the alpha-defensin family. Highly expressed in intestine, and expressed at lower levels in lung and spleen.

It is found in the secreted. In terms of biological role, has antimicrobial activity. This Ornithorhynchus anatinus (Duckbill platypus) protein is Defensin-A1.